The following is a 148-amino-acid chain: UPF0178 protein SUN_1096 (148 aa).

The protein belongs to the UPF0178 family.

In Sulfurovum sp. (strain NBC37-1), this protein is UPF0178 protein SUN_1096.